The primary structure comprises 407 residues: Protein S-acyltransferase 8 (407 aa).

2 consecutive transmembrane segments (helical) span residues 29-49 (SLPL…VFVA) and 62-82 (GYAI…LLFF). One can recognise a DHHC domain in the interval 136–186 (KYCDTCMLYRPPRCSHCSICNNCVERFDHHCPWVGQCIGLRNYRYFFMFVS). Residue cysteine 166 is the S-palmitoyl cysteine intermediate of the active site. A run of 2 helical transmembrane segments spans residues 181–201 (FFMF…MSAV) and 224–244 (AVVL…LTAF). Residues 348-368 (AEDANNNQPHHTLDIDHERAG) form a disordered region. Positions 358 to 368 (HTLDIDHERAG) are enriched in basic and acidic residues. Serine 385 is subject to Phosphoserine.

Belongs to the DHHC palmitoyltransferase family. As to expression, expressed in flowers and pollen.

The protein resides in the cell membrane. It carries out the reaction L-cysteinyl-[protein] + hexadecanoyl-CoA = S-hexadecanoyl-L-cysteinyl-[protein] + CoA. Functionally, S-acyltransferase involved in protein lipid modification. In Arabidopsis thaliana (Mouse-ear cress), this protein is Protein S-acyltransferase 8 (PAT08).